Here is a 378-residue protein sequence, read N- to C-terminus: 3-hydroxyisobutyryl-CoA hydrolase 1 (378 aa).

Ala2 is modified (N-acetylalanine). Substrate is bound by residues Glu94, Gly119, Glu142, and Asp150.

It belongs to the enoyl-CoA hydratase/isomerase family. As to expression, expressed in roots, leaves, flowers and siliques.

It localises to the peroxisome. It catalyses the reaction 3-hydroxy-2-methylpropanoyl-CoA + H2O = 3-hydroxy-2-methylpropanoate + CoA + H(+). It functions in the pathway amino-acid degradation; L-valine degradation. Inhibited by copper. Functionally, involved in valine catabolism. May be indirectly involved in benzoic acid biosynthesis and in cold signaling and cold tolerance. In Arabidopsis thaliana (Mouse-ear cress), this protein is 3-hydroxyisobutyryl-CoA hydrolase 1 (CHY1).